A 141-amino-acid polypeptide reads, in one-letter code: Large ribosomal subunit protein uL11 (141 aa).

The protein belongs to the universal ribosomal protein uL11 family. In terms of assembly, part of the ribosomal stalk of the 50S ribosomal subunit. Interacts with L10 and the large rRNA to form the base of the stalk. L10 forms an elongated spine to which L12 dimers bind in a sequential fashion forming a multimeric L10(L12)X complex. In terms of processing, one or more lysine residues are methylated.

Its function is as follows. Forms part of the ribosomal stalk which helps the ribosome interact with GTP-bound translation factors. This is Large ribosomal subunit protein uL11 from Maridesulfovibrio salexigens (strain ATCC 14822 / DSM 2638 / NCIMB 8403 / VKM B-1763) (Desulfovibrio salexigens).